We begin with the raw amino-acid sequence, 310 residues long: Methionyl-tRNA formyltransferase (310 aa).

111–114 contributes to the (6S)-5,6,7,8-tetrahydrofolate binding site; it reads SILP.

It belongs to the Fmt family.

The catalysed reaction is L-methionyl-tRNA(fMet) + (6R)-10-formyltetrahydrofolate = N-formyl-L-methionyl-tRNA(fMet) + (6S)-5,6,7,8-tetrahydrofolate + H(+). Attaches a formyl group to the free amino group of methionyl-tRNA(fMet). The formyl group appears to play a dual role in the initiator identity of N-formylmethionyl-tRNA by promoting its recognition by IF2 and preventing the misappropriation of this tRNA by the elongation apparatus. The polypeptide is Methionyl-tRNA formyltransferase (Methylobacterium nodulans (strain LMG 21967 / CNCM I-2342 / ORS 2060)).